Reading from the N-terminus, the 121-residue chain is Snaclec coagulation factor IX-binding protein subunit A (121 aa).

The C-type lectin domain maps to 1–120 (YEGHCYQTFK…CGERNPFVCE (120 aa)). 2 cysteine pairs are disulfide-bonded: Cys-22–Cys-119 and Cys-94–Cys-111. 3 residues coordinate Ca(2+): Ser-33, Glu-35, and Glu-39. Glu-120 lines the Ca(2+) pocket.

This sequence belongs to the snaclec family. As to quaternary structure, heterodimer of subunits A and B; disulfide-linked. Expressed by the venom gland.

The protein localises to the secreted. Anticoagulant protein which binds to the gamma-carboxyglutamic acid-domain regions of factor IX (F9) (but not factor X) in the presence of calcium with a 1 to 1 stoichiometry. This Gloydius halys (Chinese water mocassin) protein is Snaclec coagulation factor IX-binding protein subunit A.